A 498-amino-acid polypeptide reads, in one-letter code: Beta-amylase 5 (498 aa).

Substrate is bound by residues Asp-56, His-96, and Asp-104. Glu-189 serves as the catalytic Proton donor. Substrate-binding residues include Lys-298, His-303, and Thr-345. The Proton acceptor role is filled by Glu-383. Residues 384–385 (NA) and Arg-423 contribute to the substrate site.

It belongs to the glycosyl hydrolase 14 family. Detected in phloem sieve elements.

It localises to the cytoplasm. It carries out the reaction Hydrolysis of (1-&gt;4)-alpha-D-glucosidic linkages in polysaccharides so as to remove successive maltose units from the non-reducing ends of the chains.. Functionally, beta-amylase activity. Major cytosolic beta-amylase isoform in rosette leaves and inflorescences stems. This is Beta-amylase 5 (BAM5) from Arabidopsis thaliana (Mouse-ear cress).